A 71-amino-acid chain; its full sequence is VKRPMNAFMVWSQNERRKIMDQWPDMHNAEISKRLGRRWQLLQDSERYPLSRRRSVRLKHMADYPNYKYRP.

Residues Val-1–Lys-68 constitute a DNA-binding region (HMG box).

The protein localises to the nucleus. This Eublepharis macularius (Leopard gecko) protein is SRY-related protein LG27.